Here is a 419-residue protein sequence, read N- to C-terminus: Pyrophosphate--fructose 6-phosphate 1-phosphotransferase (419 aa).

Position 13 (Gly-13) interacts with diphosphate. Substrate is bound by residues 142–144 (TVD), 190–192 (MGR), Glu-247, and 297–300 (YLQR). The active-site Proton acceptor is Asp-144.

Belongs to the phosphofructokinase type A (PFKA) family. PPi-dependent PFK group II subfamily. Clade 'B2' sub-subfamily. Homodimer. Mg(2+) is required as a cofactor.

It is found in the cytoplasm. The catalysed reaction is beta-D-fructose 6-phosphate + diphosphate = beta-D-fructose 1,6-bisphosphate + phosphate + H(+). It participates in carbohydrate degradation; glycolysis; D-glyceraldehyde 3-phosphate and glycerone phosphate from D-glucose: step 3/4. With respect to regulation, non-allosteric. In terms of biological role, catalyzes the phosphorylation of D-fructose 6-phosphate, the first committing step of glycolysis. Uses inorganic phosphate (PPi) as phosphoryl donor instead of ATP like common ATP-dependent phosphofructokinases (ATP-PFKs), which renders the reaction reversible, and can thus function both in glycolysis and gluconeogenesis. Consistently, PPi-PFK can replace the enzymes of both the forward (ATP-PFK) and reverse (fructose-bisphosphatase (FBPase)) reactions. This chain is Pyrophosphate--fructose 6-phosphate 1-phosphotransferase, found in Halomonas elongata (strain ATCC 33173 / DSM 2581 / NBRC 15536 / NCIMB 2198 / 1H9).